We begin with the raw amino-acid sequence, 278 residues long: Small ribosomal subunit protein uS3 (278 aa).

In terms of domain architecture, KH type-2 spans 39–107 (VRDFLKKRLA…PVHVNIEEVR (69 aa)). A disordered region spans residues 217–278 (VENENEARRG…DAAAVEKEVS (62 aa)). Basic and acidic residues predominate over residues 230–239 (PRNDAGDNRG).

This sequence belongs to the universal ribosomal protein uS3 family. In terms of assembly, part of the 30S ribosomal subunit. Forms a tight complex with proteins S10 and S14.

Its function is as follows. Binds the lower part of the 30S subunit head. Binds mRNA in the 70S ribosome, positioning it for translation. In Aromatoleum aromaticum (strain DSM 19018 / LMG 30748 / EbN1) (Azoarcus sp. (strain EbN1)), this protein is Small ribosomal subunit protein uS3.